The sequence spans 366 residues: Protein FAM131A (366 aa).

The disordered stretch occupies residues Gln-342–Gln-366. Positions Leu-356 to Gln-366 are enriched in acidic residues.

Belongs to the FAM131 family.

The sequence is that of Protein FAM131A (FAM131A) from Homo sapiens (Human).